Consider the following 1403-residue polypeptide: DNA-directed RNA polymerase subunit beta' (1403 aa).

Zn(2+)-binding residues include C70, C72, C85, and C88. The Mg(2+) site is built by D461, D463, and D465. Zn(2+) contacts are provided by C816, C890, C897, and C900.

Belongs to the RNA polymerase beta' chain family. In terms of assembly, the RNAP catalytic core consists of 2 alpha, 1 beta, 1 beta' and 1 omega subunit. When a sigma factor is associated with the core the holoenzyme is formed, which can initiate transcription. The cofactor is Mg(2+). Zn(2+) is required as a cofactor.

The catalysed reaction is RNA(n) + a ribonucleoside 5'-triphosphate = RNA(n+1) + diphosphate. DNA-dependent RNA polymerase catalyzes the transcription of DNA into RNA using the four ribonucleoside triphosphates as substrates. This Dechloromonas aromatica (strain RCB) protein is DNA-directed RNA polymerase subunit beta'.